Reading from the N-terminus, the 49-residue chain is MRVNVTLACTECGERNYITTKNKRTNPERIEMKKHCARDNKHTMHRETK.

Belongs to the bacterial ribosomal protein bL33 family.

The protein is Large ribosomal subunit protein bL33A of Staphylococcus saprophyticus subsp. saprophyticus (strain ATCC 15305 / DSM 20229 / NCIMB 8711 / NCTC 7292 / S-41).